Here is a 387-residue protein sequence, read N- to C-terminus: MACLRKLKEDIQVLEKLFPKNHNRFQILSASVDELSMKFINAENKGIIVTANIQENYPRQPPIWFSESDDVPVIGMSLQRLTETEESTNILHQVHRLVSDLCSFYNLQMPCELPQIAPPVRDDIDEGRGSDISDTTSEPIDDDMAGDGEVDDDDEEEEDDEDADGDIEIVEMAEEDPTSQHDVGVSKEGLDMLDKVSKINRQQHLDGKVQGSITATDRLMKEIRDIHRSEHFKNGIYTFELEKEENLYQWWIKLHKVDEDSPLFEDMKKLKKDHNQDHLLFSFTFNEKFPCDPPFVRVVAPHINQGFVLGGGAICMELLTKQGWSSAYSIESCILQIAATLVKGRARISFDAKHTSTYSMARAQQSFKSLQQIHAKSGWYTPPKTEG.

The tract at residues 117-164 (APPVRDDIDEGRGSDISDTTSEPIDDDMAGDGEVDDDDEEEEDDEDAD) is disordered. Positions 120 to 131 (VRDDIDEGRGSD) are enriched in basic and acidic residues. Residues 139–164 (PIDDDMAGDGEVDDDDEEEEDDEDAD) show a composition bias toward acidic residues. Positions 214-380 (TATDRLMKEI…QQIHAKSGWY (167 aa)) constitute a UBC core domain. Cysteine 315 serves as the catalytic Glycyl thioester intermediate.

Belongs to the ubiquitin-conjugating enzyme family. As to expression, in the embryo, expressed in precursor neuron and muscle cells and in other cells such as hypodermal cells. After hatching of L1 larvae and in all subsequent stages, strongest expression in pharyngeal muscle and anal muscle cells. In L4 larvae and adolescent hermaphrodites, also expressed in the vulval muscles. Expression also detected in all four nerve cords and in neurons with weaker levels in all body wall muscles.

The protein resides in the cytoplasm. It localises to the nucleus. The catalysed reaction is S-ubiquitinyl-[E1 ubiquitin-activating enzyme]-L-cysteine + [E2 ubiquitin-conjugating enzyme]-L-cysteine = [E1 ubiquitin-activating enzyme]-L-cysteine + S-ubiquitinyl-[E2 ubiquitin-conjugating enzyme]-L-cysteine.. It participates in protein modification; protein ubiquitination. In terms of biological role, catalyzes the covalent attachment of ubiquitin to other proteins (Potential). Required for the maintenance of neuromuscular function. This chain is Ubiquitin-conjugating enzyme E2 25, found in Caenorhabditis elegans.